A 378-amino-acid polypeptide reads, in one-letter code: Spermidine/putrescine import ATP-binding protein PotA (378 aa).

The ABC transporter domain maps to 18-248; the sequence is VQLAGIRKCF…PKNLFVAGFI (231 aa). Position 50–57 (50–57) interacts with ATP; sequence GPSGCGKT.

It belongs to the ABC transporter superfamily. Spermidine/putrescine importer (TC 3.A.1.11.1) family. In terms of assembly, the complex is composed of two ATP-binding proteins (PotA), two transmembrane proteins (PotB and PotC) and a solute-binding protein (PotD).

The protein resides in the cell inner membrane. The catalysed reaction is ATP + H2O + polyamine-[polyamine-binding protein]Side 1 = ADP + phosphate + polyamineSide 2 + [polyamine-binding protein]Side 1.. In terms of biological role, part of the ABC transporter complex PotABCD involved in spermidine/putrescine import. Responsible for energy coupling to the transport system. This chain is Spermidine/putrescine import ATP-binding protein PotA, found in Escherichia coli O1:K1 / APEC.